We begin with the raw amino-acid sequence, 179 residues long: Large ribosomal subunit protein uL5 (179 aa).

It belongs to the universal ribosomal protein uL5 family. In terms of assembly, part of the 50S ribosomal subunit; part of the 5S rRNA/L5/L18/L25 subcomplex. Contacts the 5S rRNA and the P site tRNA. Forms a bridge to the 30S subunit in the 70S ribosome.

Functionally, this is one of the proteins that bind and probably mediate the attachment of the 5S RNA into the large ribosomal subunit, where it forms part of the central protuberance. In the 70S ribosome it contacts protein S13 of the 30S subunit (bridge B1b), connecting the 2 subunits; this bridge is implicated in subunit movement. Contacts the P site tRNA; the 5S rRNA and some of its associated proteins might help stabilize positioning of ribosome-bound tRNAs. The sequence is that of Large ribosomal subunit protein uL5 from Buchnera aphidicola subsp. Acyrthosiphon kondoi (Acyrthosiphon kondoi symbiotic bacterium).